Reading from the N-terminus, the 520-residue chain is Ubiquitin carboxyl-terminal hydrolase 3 (520 aa).

An N-acetylmethionine modification is found at M1. The segment at 1–121 (MECPHLSSSV…QKVREHLQNL (121 aa)) adopts a UBP-type zinc-finger fold. 12 residues coordinate Zn(2+): C3, H5, C29, C32, C41, C44, C49, H56, H60, H82, C95, and C98. The USP domain occupies 159–511 (TGLRNLGNTC…KAYILFYVER (353 aa)). C168 acts as the Nucleophile in catalysis. H471 acts as the Proton acceptor in catalysis.

Belongs to the peptidase C19 family. USP3 subfamily. Interacts (via UBP-type domain) with H2A; the interaction is less efficient than with monoubiquitinated H2A.

The protein resides in the nucleus. It is found in the cytoplasm. It catalyses the reaction Thiol-dependent hydrolysis of ester, thioester, amide, peptide and isopeptide bonds formed by the C-terminal Gly of ubiquitin (a 76-residue protein attached to proteins as an intracellular targeting signal).. Its function is as follows. Deubiquitinase that plays a role in several cellular processes including transcriptional regulation, cell cycle progression or innate immunity. In response to DNA damage, deubiquitinates monoubiquitinated target proteins such as histone H2A and H2AX and thereby counteracts RNF168- and RNF8-mediated ubiquitination. In turn, participates in the recruitment of DNA damage repair factors to DNA break sites. Required for proper progression through S phase and subsequent mitotic entry. Acts as a positive regulator of TP53 by deubiquitinating and stabilizing it to promote normal cell proliferation and transformation. Participates in establishing tolerance innate immune memory through non-transcriptional feedback. Mechanistically, negatively regulates TLR-induced NF-kappa-B signaling by targeting and removing the 'Lys-63'-linked polyubiquitin chains on MYD88. Negatively regulates the activation of type I interferon signaling by mediating 'Lys-63'-linked polyubiquitin chains on RIGI and IFIH1. Also deubiquinates ASC/PYCARD, the central adapter mediating the assembly and activation of most inflammasomes, and thereby promotes inflammasome activation. This is Ubiquitin carboxyl-terminal hydrolase 3 (Usp3) from Mus musculus (Mouse).